Reading from the N-terminus, the 208-residue chain is Small ribosomal subunit protein uS4 (208 aa).

The interval 32 to 53 (LNRKRGKNSPGQHGASKVKMSD) is disordered. One can recognise an S4 RNA-binding domain in the interval 99–161 (LRLDNVVYRL…YKSNVIIKKL (63 aa)).

Belongs to the universal ribosomal protein uS4 family. In terms of assembly, part of the 30S ribosomal subunit. Contacts protein S5. The interaction surface between S4 and S5 is involved in control of translational fidelity.

In terms of biological role, one of the primary rRNA binding proteins, it binds directly to 16S rRNA where it nucleates assembly of the body of the 30S subunit. Its function is as follows. With S5 and S12 plays an important role in translational accuracy. This Endomicrobium trichonymphae protein is Small ribosomal subunit protein uS4.